A 195-amino-acid chain; its full sequence is Putative NADH dehydrogenase/NAD(P)H nitroreductase CC_0061 (195 aa).

The protein belongs to the nitroreductase family. HadB/RutE subfamily. It depends on FMN as a cofactor.

This is Putative NADH dehydrogenase/NAD(P)H nitroreductase CC_0061 from Caulobacter vibrioides (strain ATCC 19089 / CIP 103742 / CB 15) (Caulobacter crescentus).